The chain runs to 706 residues: Elongation factor G (706 aa).

Positions 8–297 (ERVRNIGIAA…AVIDYLPAPT (290 aa)) constitute a tr-type G domain. Residues 17–24 (AHIDAGKT), 96–100 (DTPGH), and 150–153 (NKMD) each bind GTP.

The protein belongs to the TRAFAC class translation factor GTPase superfamily. Classic translation factor GTPase family. EF-G/EF-2 subfamily.

The protein localises to the cytoplasm. Its function is as follows. Catalyzes the GTP-dependent ribosomal translocation step during translation elongation. During this step, the ribosome changes from the pre-translocational (PRE) to the post-translocational (POST) state as the newly formed A-site-bound peptidyl-tRNA and P-site-bound deacylated tRNA move to the P and E sites, respectively. Catalyzes the coordinated movement of the two tRNA molecules, the mRNA and conformational changes in the ribosome. The chain is Elongation factor G from Cyanothece sp. (strain PCC 7425 / ATCC 29141).